The sequence spans 615 residues: 1-deoxy-D-xylulose-5-phosphate synthase (615 aa).

Residues His-76 and 117-119 (GHS) each bind thiamine diphosphate. Mg(2+) is bound at residue Asp-148. Residues 149-150 (GA), Asn-177, Tyr-284, and Glu-365 each bind thiamine diphosphate. Residue Asn-177 participates in Mg(2+) binding.

It belongs to the transketolase family. DXPS subfamily. Homodimer. Mg(2+) serves as cofactor. The cofactor is thiamine diphosphate.

The enzyme catalyses D-glyceraldehyde 3-phosphate + pyruvate + H(+) = 1-deoxy-D-xylulose 5-phosphate + CO2. It participates in metabolic intermediate biosynthesis; 1-deoxy-D-xylulose 5-phosphate biosynthesis; 1-deoxy-D-xylulose 5-phosphate from D-glyceraldehyde 3-phosphate and pyruvate: step 1/1. Functionally, catalyzes the acyloin condensation reaction between C atoms 2 and 3 of pyruvate and glyceraldehyde 3-phosphate to yield 1-deoxy-D-xylulose-5-phosphate (DXP). This chain is 1-deoxy-D-xylulose-5-phosphate synthase, found in Francisella tularensis subsp. mediasiatica (strain FSC147).